A 78-amino-acid polypeptide reads, in one-letter code: Exodeoxyribonuclease 7 small subunit (78 aa).

The protein belongs to the XseB family. Heterooligomer composed of large and small subunits.

Its subcellular location is the cytoplasm. It carries out the reaction Exonucleolytic cleavage in either 5'- to 3'- or 3'- to 5'-direction to yield nucleoside 5'-phosphates.. Functionally, bidirectionally degrades single-stranded DNA into large acid-insoluble oligonucleotides, which are then degraded further into small acid-soluble oligonucleotides. This chain is Exodeoxyribonuclease 7 small subunit, found in Oceanobacillus iheyensis (strain DSM 14371 / CIP 107618 / JCM 11309 / KCTC 3954 / HTE831).